The sequence spans 267 residues: Regulatory protein RecX (267 aa).

The protein belongs to the RecX family.

The protein localises to the cytoplasm. Functionally, modulates RecA activity. This is Regulatory protein RecX from Staphylococcus haemolyticus (strain JCSC1435).